The primary structure comprises 699 residues: Glycine--tRNA ligase beta subunit (699 aa).

It belongs to the class-II aminoacyl-tRNA synthetase family. As to quaternary structure, tetramer of two alpha and two beta subunits.

It localises to the cytoplasm. It carries out the reaction tRNA(Gly) + glycine + ATP = glycyl-tRNA(Gly) + AMP + diphosphate. This Bradyrhizobium diazoefficiens (strain JCM 10833 / BCRC 13528 / IAM 13628 / NBRC 14792 / USDA 110) protein is Glycine--tRNA ligase beta subunit.